A 132-amino-acid chain; its full sequence is D-ribose pyranase (132 aa).

His20 functions as the Proton donor in the catalytic mechanism. Residues Asp28, His99, and Tyr121–Asn123 contribute to the substrate site.

This sequence belongs to the RbsD / FucU family. RbsD subfamily. Homodecamer.

Its subcellular location is the cytoplasm. The enzyme catalyses beta-D-ribopyranose = beta-D-ribofuranose. The protein operates within carbohydrate metabolism; D-ribose degradation; D-ribose 5-phosphate from beta-D-ribopyranose: step 1/2. In terms of biological role, catalyzes the interconversion of beta-pyran and beta-furan forms of D-ribose. In Streptococcus agalactiae serotype V (strain ATCC BAA-611 / 2603 V/R), this protein is D-ribose pyranase.